A 376-amino-acid polypeptide reads, in one-letter code: Chaperone protein DnaJ (376 aa).

The 66-residue stretch at 5–70 folds into the J domain; the sequence is DYYEVLGVAR…NKRRAYDAHG (66 aa). The CR-type zinc finger occupies 132-209; the sequence is GIERRIEIPT…CHGAGRVEED (78 aa). Residues cysteine 145, cysteine 148, cysteine 161, cysteine 164, cysteine 183, cysteine 186, cysteine 197, and cysteine 200 each contribute to the Zn(2+) site. CXXCXGXG motif repeat units follow at residues 145–152, 161–168, 183–190, and 197–204; these read CEPCHGSG, CATCHGRG, CPHCDGRG, and CKTCHGAG.

This sequence belongs to the DnaJ family. Homodimer. Zn(2+) serves as cofactor.

It localises to the cytoplasm. Its function is as follows. Participates actively in the response to hyperosmotic and heat shock by preventing the aggregation of stress-denatured proteins and by disaggregating proteins, also in an autonomous, DnaK-independent fashion. Unfolded proteins bind initially to DnaJ; upon interaction with the DnaJ-bound protein, DnaK hydrolyzes its bound ATP, resulting in the formation of a stable complex. GrpE releases ADP from DnaK; ATP binding to DnaK triggers the release of the substrate protein, thus completing the reaction cycle. Several rounds of ATP-dependent interactions between DnaJ, DnaK and GrpE are required for fully efficient folding. Also involved, together with DnaK and GrpE, in the DNA replication of plasmids through activation of initiation proteins. The protein is Chaperone protein DnaJ of Xanthomonas campestris pv. campestris (strain 8004).